Reading from the N-terminus, the 177-residue chain is ATP synthase subunit b, chloroplastic (177 aa).

A helical transmembrane segment spans residues 22-42 (ILETNIINLAAVVGIVVFFVG).

It belongs to the ATPase B chain family. In terms of assembly, F-type ATPases have 2 components, F(1) - the catalytic core - and F(0) - the membrane proton channel. F(1) has five subunits: alpha(3), beta(3), gamma(1), delta(1), epsilon(1). F(0) has four main subunits: a(1), b(1), b'(1) and c(10-14). The alpha and beta chains form an alternating ring which encloses part of the gamma chain. F(1) is attached to F(0) by a central stalk formed by the gamma and epsilon chains, while a peripheral stalk is formed by the delta, b and b' chains.

The protein resides in the plastid. It is found in the chloroplast thylakoid membrane. Its function is as follows. F(1)F(0) ATP synthase produces ATP from ADP in the presence of a proton or sodium gradient. F-type ATPases consist of two structural domains, F(1) containing the extramembraneous catalytic core and F(0) containing the membrane proton channel, linked together by a central stalk and a peripheral stalk. During catalysis, ATP synthesis in the catalytic domain of F(1) is coupled via a rotary mechanism of the central stalk subunits to proton translocation. In terms of biological role, component of the F(0) channel, it forms part of the peripheral stalk, linking F(1) to F(0). The chain is ATP synthase subunit b, chloroplastic from Oedogonium cardiacum (Filamentous green alga).